We begin with the raw amino-acid sequence, 373 residues long: 3 beta-hydroxysteroid dehydrogenase/Delta 5--&gt;4-isomerase type 2 (373 aa).

Y155 serves as the catalytic Proton acceptor. K159 lines the NAD(+) pocket. A helical transmembrane segment spans residues 288–308 (LPLLYWLAFLLETVSFLLRPF).

This sequence belongs to the 3-beta-HSD family. In terms of tissue distribution, adrenal glands, testes and ovaries.

The protein resides in the endoplasmic reticulum membrane. Its subcellular location is the mitochondrion membrane. The enzyme catalyses a 3beta-hydroxy-Delta(5)-steroid + NAD(+) = a 3-oxo-Delta(5)-steroid + NADH + H(+). The catalysed reaction is a 3-oxo-Delta(5)-steroid = a 3-oxo-Delta(4)-steroid. The protein operates within lipid metabolism; steroid biosynthesis. 3-beta-HSD is a bifunctional enzyme, that catalyzes the oxidative conversion of Delta(5)-ene-3-beta-hydroxy steroid, and the oxidative conversion of ketosteroids. The 3-beta-HSD enzymatic system plays a crucial role in the biosynthesis of all classes of hormonal steroids. In Rattus norvegicus (Rat), this protein is 3 beta-hydroxysteroid dehydrogenase/Delta 5--&gt;4-isomerase type 2 (Hsd3b).